Reading from the N-terminus, the 348-residue chain is Small ribosomal subunit biogenesis GTPase RsgA (348 aa).

One can recognise a CP-type G domain in the interval 72–230 (RNQLSRPAIA…IADTPGFNQP (159 aa)). Residues 121-124 (TKAD) and 172-180 (GPSGVGKSS) contribute to the GTP site. Zn(2+) contacts are provided by cysteine 255, cysteine 260, histidine 262, and cysteine 268. The span at 305–322 (AKSDRQGQQRLEPLLDAK) shows a compositional bias: basic and acidic residues. The tract at residues 305-348 (AKSDRQGQQRLEPLLDAKKYRRRSRRQQHQHVNPMAEEVLDSEW) is disordered. Positions 323-333 (KYRRRSRRQQH) are enriched in basic residues.

Belongs to the TRAFAC class YlqF/YawG GTPase family. RsgA subfamily. Monomer. Associates with 30S ribosomal subunit, binds 16S rRNA. Zn(2+) serves as cofactor.

Its subcellular location is the cytoplasm. Functionally, one of several proteins that assist in the late maturation steps of the functional core of the 30S ribosomal subunit. Helps release RbfA from mature subunits. May play a role in the assembly of ribosomal proteins into the subunit. Circularly permuted GTPase that catalyzes slow GTP hydrolysis, GTPase activity is stimulated by the 30S ribosomal subunit. The polypeptide is Small ribosomal subunit biogenesis GTPase RsgA (Thermosynechococcus vestitus (strain NIES-2133 / IAM M-273 / BP-1)).